Reading from the N-terminus, the 100-residue chain is Large ribosomal subunit protein bL27 (100 aa).

Residues 1-9 constitute a propeptide that is removed on maturation; it reads MLVMNLQLF.

Belongs to the bacterial ribosomal protein bL27 family. The N-terminus is cleaved by ribosomal processing cysteine protease Prp.

The polypeptide is Large ribosomal subunit protein bL27 (Clostridium botulinum (strain Hall / ATCC 3502 / NCTC 13319 / Type A)).